A 76-amino-acid chain; its full sequence is Acyl carrier protein (76 aa).

One can recognise a Carrier domain in the interval 1–76 (MATFDEVKEV…AAVDYIGSKQ (76 aa)). An O-(pantetheine 4'-phosphoryl)serine modification is found at Ser-36.

The protein belongs to the acyl carrier protein (ACP) family. 4'-phosphopantetheine is transferred from CoA to a specific serine of apo-ACP by AcpS. This modification is essential for activity because fatty acids are bound in thioester linkage to the sulfhydryl of the prosthetic group.

It is found in the cytoplasm. It functions in the pathway lipid metabolism; fatty acid biosynthesis. Its function is as follows. Carrier of the growing fatty acid chain in fatty acid biosynthesis. The sequence is that of Acyl carrier protein from Deinococcus geothermalis (strain DSM 11300 / CIP 105573 / AG-3a).